Here is a 2837-residue protein sequence, read N- to C-terminus: Bifunctional DNA-directed RNA polymerase subunit beta-beta' (2837 aa).

The DNA-directed RNA polymerase subunit beta stretch occupies residues 1 to 1433; sequence MVDSSYMYAS…CLNVDLKQND (1433 aa). Positions 1436–2837 are DNA-directed RNA polymerase subunit beta'; sequence IEDISHTNIA…ESVVAYDQSN (1402 aa). The Zn(2+) site is built by cysteine 1501, cysteine 1503, cysteine 1516, and cysteine 1519. Residues aspartate 1893, aspartate 1895, and aspartate 1897 each contribute to the Mg(2+) site. Zn(2+)-binding residues include cysteine 2235, cysteine 2309, cysteine 2316, and cysteine 2319.

In the N-terminal section; belongs to the RNA polymerase beta chain family. The protein in the C-terminal section; belongs to the RNA polymerase beta' chain family. In terms of assembly, the RNAP catalytic core consists of 2 alpha, 1 beta/beta' and 1 omega subunit. When a sigma factor is associated with the core the holoenzyme is formed, which can initiate transcription. Requires Mg(2+) as cofactor. The cofactor is Zn(2+).

It catalyses the reaction RNA(n) + a ribonucleoside 5'-triphosphate = RNA(n+1) + diphosphate. In terms of biological role, DNA-dependent RNA polymerase catalyzes the transcription of DNA into RNA using the four ribonucleoside triphosphates as substrates. This chain is Bifunctional DNA-directed RNA polymerase subunit beta-beta' (rpoBC), found in Wolbachia pipientis wMel.